We begin with the raw amino-acid sequence, 68 residues long: Coiled-coil domain-containing protein 179 (68 aa).

The disordered stretch occupies residues serine 11 to serine 68. The span at proline 18–glutamate 28 shows a compositional bias: basic and acidic residues. Residues threonine 27–phenylalanine 53 are a coiled coil. Residues histidine 41–serine 54 are compositionally biased toward basic residues.

This Homo sapiens (Human) protein is Coiled-coil domain-containing protein 179 (CCDC179).